Reading from the N-terminus, the 275-residue chain is Apoptosis inhibitor 1 (275 aa).

BIR repeat units follow at residues 24 to 91 (LIER…CVYA) and 126 to 193 (PSAR…CYFV). Residues C163, C166, H183, and C190 each coordinate Zn(2+). The RING-type zinc finger occupies 227 to 263 (CKVCLERQRDAVLLPCRHFCVCMQCYFALDGKCPTCR).

Functionally, acts by blocking cellular apoptosis rather than by preventing viral stimulation of apoptosis. In Orgyia pseudotsugata (Douglas-fir tussock moth), this protein is Apoptosis inhibitor 1 (IAP1).